The chain runs to 469 residues: Mitochondrial adenyl nucleotide antiporter SLC25A25 (469 aa).

The tract at residues 1-165 is regulatory N-terminal domain; it reads MLCLCLYVPI…LYWKHSTIFD (165 aa). Over 1–189 the chain is Mitochondrial intermembrane; it reads MLCLCLYVPI…ERQTGMWWRH (189 aa). EF-hand domains are found at residues 47–80, 78–113, and 114–149; these read TYRQWKQKIVQAGDKDLDGQLDFEEFVHYLQDHE, DHEKKLRLVFKSLDKKNDGRIDAQEIMQSLRDLGVK, and ISEQQAEKILKSMDKNGTMTIDWNEWRDYHLLHPVE. Ca(2+) contacts are provided by Asp60, Asp62, Asp64, Gln66, and Glu71. Positions 151–160 are linker region; it reads IPEIILYWKH. Residues 166–469 form a C-terminal transmembrane transporter domain region; it reads VGENLTVPDE…LKITLGVQSR (304 aa). 3 Solcar repeats span residues 184 to 270, 278 to 363, and 375 to 463; these read GMWW…MKRL, LRIH…LKNT, and PGVF…LKIT. The chain crosses the membrane as a helical span at residues 190–207; that stretch reads LVAGGGAGAVSRTCTAPL. Topologically, residues 208–244 are mitochondrial matrix; the sequence is DRLKVLMQVHASRSNNMCIVGGFTQMIREGGAKSLWR. Residues 245-264 form a helical membrane-spanning segment; the sequence is GNGINVLKIAPESAIKFMAY. Residues 265-287 are Mitochondrial intermembrane-facing; that stretch reads EQMKRLVGSDQETLRIHERLVAG. The helical transmembrane segment at 288-301 threads the bilayer; sequence SLAGAIAQSSIYPM. The Mitochondrial matrix segment spans residues 302-337; that stretch reads EVLKTRMALRKTGQYSGMLDCARRILAKEGVAAFYK. A helical membrane pass occupies residues 338 to 357; it reads GYIPNMLGIIPYAGIDLAVY. At 358 to 380 the chain is on the mitochondrial intermembrane side; sequence ETLKNTWLQRYAVNSADPGVFVL. Residues 381–398 traverse the membrane as a helical segment; the sequence is LACGTISSTCGQLASYPL. Residues 399–437 lie on the Mitochondrial matrix side of the membrane; sequence ALVRTRMQAQASIEGAPEVTMSSLFKQILRTEGAFGLYR. The helical transmembrane segment at 438-457 threads the bilayer; sequence GLAPNFMKVIPAVSISYVVY. The Mitochondrial intermembrane portion of the chain corresponds to 458–469; sequence ENLKITLGVQSR.

It belongs to the mitochondrial carrier (TC 2.A.29) family.

It localises to the mitochondrion inner membrane. The catalysed reaction is Mg(2+)(out) + phosphate(in) + ATP(out) = Mg(2+)(in) + phosphate(out) + ATP(in). With respect to regulation, activated by an increase in cytosolic calcium levels that induce a conformational change of the N-terminal regulatory domain, uncapping the channel and allowing transport. Its function is as follows. Electroneutral antiporter that most probably mediates the transport of adenyl nucleotides through the inner mitochondrial membrane. Originally identified as an ATP-magnesium/inorganic phosphate antiporter, it could have a broader specificity for adenyl nucleotides. By regulating the mitochondrial matrix adenyl nucleotide pool could adapt to changing cellular energetic demands and indirectly regulate adenyl nucleotide-dependent metabolic pathways. This is Mitochondrial adenyl nucleotide antiporter SLC25A25 from Mus musculus (Mouse).